The following is a 271-amino-acid chain: Putative mitochondrial carrier protein PET8 (271 aa).

Solcar repeat units lie at residues 3–76, 91–177, and 187–270; these read STFL…MKQQ, AEVL…LKKK, and VSAW…VHSL. Helical transmembrane passes span 6–26, 51–71, 97–117, 152–168, 193–213, and 251–271; these read LASL…FFPI, GLGS…VTYD, MLSS…AEVI, GWWT…CIQF, AVCG…LDVL, and MWIS…HSLF.

It belongs to the mitochondrial carrier (TC 2.A.29) family.

The protein localises to the mitochondrion inner membrane. In Eremothecium gossypii (strain ATCC 10895 / CBS 109.51 / FGSC 9923 / NRRL Y-1056) (Yeast), this protein is Putative mitochondrial carrier protein PET8 (PET8).